The primary structure comprises 493 residues: Glutamyl-tRNA(Gln) amidotransferase subunit A (493 aa).

Active-site charge relay system residues include Lys81 and Ser156. Ser180 functions as the Acyl-ester intermediate in the catalytic mechanism.

Belongs to the amidase family. GatA subfamily. In terms of assembly, heterotrimer of A, B and C subunits.

It catalyses the reaction L-glutamyl-tRNA(Gln) + L-glutamine + ATP + H2O = L-glutaminyl-tRNA(Gln) + L-glutamate + ADP + phosphate + H(+). Functionally, allows the formation of correctly charged Gln-tRNA(Gln) through the transamidation of misacylated Glu-tRNA(Gln) in organisms which lack glutaminyl-tRNA synthetase. The reaction takes place in the presence of glutamine and ATP through an activated gamma-phospho-Glu-tRNA(Gln). The chain is Glutamyl-tRNA(Gln) amidotransferase subunit A from Mycobacterium ulcerans (strain Agy99).